Here is a 493-residue protein sequence, read N- to C-terminus: MGNYFNTLNLRQQLDQLGRCRFMDREEFADEVNFLKGKKIVIIGCGAQGLNQGLNMRDSGLDIAYALRPEAIEEKRASFQRASENGFVVGTYQQLIPTADLVINLTPDKQHSKVVADVMPLIKQGAALGYSHGLNIVELGEKIRQDITVVMVAPKCPGTEVREEFKRGFGVPTLIAVHPENDPKGEGLAIAKAWAAATGGHRAGVLESSFVAEVKSDLMGEQTILCGMLQAGSLVCYDKLIADGKDPAYAGKLIQYGWETITEALKQGGITLMMDRLSNSAKLRAFSLSEQIKEKLDFLFKKHMDDIISGEFSRVMMEDWANGDANLLEWREQTGKTAFENAPKGENIKISEQEYFDHGVLMVAMVKAGVELAFDTMVETGIYEESAYYESLHELPLIANTIARKRLYEMNVVISDTAEYGNYLFANVAAPILAKEIIPTLKRGDLGESTPATEIDNILLRDVNDAIRQHPIELIGQELRGYMTDMKRISSQE.

In terms of domain architecture, KARI N-terminal Rossmann spans 14 to 208; the sequence is LDQLGRCRFM…GGHRAGVLES (195 aa). Residues 45–48, R68, R76, S78, and 108–110 contribute to the NADP(+) site; these read CGAQ and DKQ. H132 is an active-site residue. NADP(+) is bound at residue G158. KARI C-terminal knotted domains are found at residues 209–345 and 346–486; these read SFVA…APKG and ENIK…MTDM. D217, E221, E390, and E394 together coordinate Mg(2+). Position 415 (S415) interacts with substrate.

The protein belongs to the ketol-acid reductoisomerase family. The cofactor is Mg(2+).

It catalyses the reaction (2R)-2,3-dihydroxy-3-methylbutanoate + NADP(+) = (2S)-2-acetolactate + NADPH + H(+). The enzyme catalyses (2R,3R)-2,3-dihydroxy-3-methylpentanoate + NADP(+) = (S)-2-ethyl-2-hydroxy-3-oxobutanoate + NADPH + H(+). It participates in amino-acid biosynthesis; L-isoleucine biosynthesis; L-isoleucine from 2-oxobutanoate: step 2/4. The protein operates within amino-acid biosynthesis; L-valine biosynthesis; L-valine from pyruvate: step 2/4. Involved in the biosynthesis of branched-chain amino acids (BCAA). Catalyzes an alkyl-migration followed by a ketol-acid reduction of (S)-2-acetolactate (S2AL) to yield (R)-2,3-dihydroxy-isovalerate. In the isomerase reaction, S2AL is rearranged via a Mg-dependent methyl migration to produce 3-hydroxy-3-methyl-2-ketobutyrate (HMKB). In the reductase reaction, this 2-ketoacid undergoes a metal-dependent reduction by NADPH to yield (R)-2,3-dihydroxy-isovalerate. The chain is Ketol-acid reductoisomerase (NADP(+)) from Histophilus somni (strain 2336) (Haemophilus somnus).